Reading from the N-terminus, the 149-residue chain is Deoxyuridine 5'-triphosphate nucleotidohydrolase (149 aa).

Substrate-binding positions include 68–70 (RSG), N81, 85–87 (LID), and M95.

The protein belongs to the dUTPase family. Requires Mg(2+) as cofactor.

The enzyme catalyses dUTP + H2O = dUMP + diphosphate + H(+). It functions in the pathway pyrimidine metabolism; dUMP biosynthesis; dUMP from dCTP (dUTP route): step 2/2. In terms of biological role, this enzyme is involved in nucleotide metabolism: it produces dUMP, the immediate precursor of thymidine nucleotides and it decreases the intracellular concentration of dUTP so that uracil cannot be incorporated into DNA. The protein is Deoxyuridine 5'-triphosphate nucleotidohydrolase of Herminiimonas arsenicoxydans.